The following is a 338-amino-acid chain: DNA-directed RNA polymerase subunit alpha (338 aa).

An alpha N-terminal domain (alpha-NTD) region spans residues 1-225; sequence MLISQRPTLT…ELFGLARELN (225 aa). Residues 242–338 are alpha C-terminal domain (alpha-CTD); sequence YIAAYSMPIE…YIDVEPEDAE (97 aa). Positions 314–338 are disordered; sequence FDPSTLEGYDAETGGYIDVEPEDAE.

Belongs to the RNA polymerase alpha chain family. In terms of assembly, homodimer. The RNAP catalytic core consists of 2 alpha, 1 beta, 1 beta' and 1 omega subunit. When a sigma factor is associated with the core the holoenzyme is formed, which can initiate transcription.

It catalyses the reaction RNA(n) + a ribonucleoside 5'-triphosphate = RNA(n+1) + diphosphate. DNA-dependent RNA polymerase catalyzes the transcription of DNA into RNA using the four ribonucleoside triphosphates as substrates. This chain is DNA-directed RNA polymerase subunit alpha, found in Corynebacterium efficiens (strain DSM 44549 / YS-314 / AJ 12310 / JCM 11189 / NBRC 100395).